We begin with the raw amino-acid sequence, 25 residues long: Neuromedin-U-25 (25 aa).

An Asparagine amide modification is found at Asn25.

Belongs to the NmU family.

Its subcellular location is the secreted. Stimulates uterine smooth muscle contraction and causes selective vasoconstriction. This chain is Neuromedin-U-25 (NMU), found in Sus scrofa (Pig).